Consider the following 512-residue polypeptide: Polyamine aminopropyltransferase (512 aa).

7 helical membrane-spanning segments follow: residues 19 to 39 (IVSI…SYIL), 48 to 68 (LTIS…EKFM), 76 to 96 (VWIE…MFGI), 108 to 128 (YLYS…PILI), 151 to 171 (AGGL…FGMV), 172 to 192 (KTAF…LWLF), and 199 to 219 (FIVH…GLFF). In terms of domain architecture, PABS spans 215 to 450 (AGLFFGEEMA…GNWGFVMASR (236 aa)). The interval 217–457 (LFFGEEMAFN…ASREEIDLDI (241 aa)) is spermidine synthase. Residue Gln245 participates in S-methyl-5'-thioadenosine binding. Positions 275 and 299 each coordinate spermidine. S-methyl-5'-thioadenosine is bound by residues Asp319 and 353–354 (DA). Asp371 acts as the Proton acceptor in catalysis.

The protein belongs to the spermidine/spermine synthase family. In terms of assembly, homodimer or homotetramer.

The protein localises to the cell membrane. The enzyme catalyses S-adenosyl 3-(methylsulfanyl)propylamine + putrescine = S-methyl-5'-thioadenosine + spermidine + H(+). The protein operates within amine and polyamine biosynthesis; spermidine biosynthesis; spermidine from putrescine: step 1/1. Its function is as follows. Catalyzes the irreversible transfer of a propylamine group from the amino donor S-adenosylmethioninamine (decarboxy-AdoMet) to putrescine (1,4-diaminobutane) to yield spermidine. This chain is Polyamine aminopropyltransferase, found in Oceanobacillus iheyensis (strain DSM 14371 / CIP 107618 / JCM 11309 / KCTC 3954 / HTE831).